The chain runs to 344 residues: Biotin synthase (344 aa).

In terms of domain architecture, Radical SAM core spans Pro65–Arg290. Cys80, Cys84, and Cys87 together coordinate [4Fe-4S] cluster. [2Fe-2S] cluster contacts are provided by Cys123, Cys156, Cys215, and Arg285.

It belongs to the radical SAM superfamily. Biotin synthase family. Homodimer. [4Fe-4S] cluster serves as cofactor. [2Fe-2S] cluster is required as a cofactor.

The catalysed reaction is (4R,5S)-dethiobiotin + (sulfur carrier)-SH + 2 reduced [2Fe-2S]-[ferredoxin] + 2 S-adenosyl-L-methionine = (sulfur carrier)-H + biotin + 2 5'-deoxyadenosine + 2 L-methionine + 2 oxidized [2Fe-2S]-[ferredoxin]. It functions in the pathway cofactor biosynthesis; biotin biosynthesis; biotin from 7,8-diaminononanoate: step 2/2. In terms of biological role, catalyzes the conversion of dethiobiotin (DTB) to biotin by the insertion of a sulfur atom into dethiobiotin via a radical-based mechanism. The polypeptide is Biotin synthase (Mycolicibacterium paratuberculosis (strain ATCC BAA-968 / K-10) (Mycobacterium paratuberculosis)).